The sequence spans 197 residues: Endothelial cell-specific chemotaxis regulator (197 aa).

The N-terminal stretch at M1–S23 is a signal peptide. Topologically, residues E24–T113 are extracellular. The disordered stretch occupies residues T40–T107. Residues G50–L63 show a composition bias toward polar residues. The span at S64–S82 shows a compositional bias: low complexity. The span at H83–T107 shows a compositional bias: polar residues. The chain crosses the membrane as a helical span at residues V114–V134. At S135 to L197 the chain is on the cytoplasmic side. 2 disordered regions span residues N146–E172 and S178–L197. 2 stretches are compositionally biased toward polar residues: residues P155–N168 and S178–G189. S187 carries the phosphoserine modification.

It belongs to the ECSCR family. In terms of assembly, interacts with FLNA. Interacts with the 20S proteasome subunit PSMA7. In terms of processing, may be heavily O-glycosylated.

The protein resides in the cell membrane. It localises to the cytoplasm. Functionally, regulates endothelial chemotaxis and tube formation. Has a role in angiogenesis and apoptosis via modulation of the actin cytoskeleton and facilitation of proteasomal degradation of the apoptosis inhibitors BIRC3/IAP1 and BIRC2/IAP2. The protein is Endothelial cell-specific chemotaxis regulator (ECSCR) of Bos taurus (Bovine).